Reading from the N-terminus, the 89-residue chain is Small ribosomal subunit protein uS14A (89 aa).

Belongs to the universal ribosomal protein uS14 family. As to quaternary structure, part of the 30S ribosomal subunit. Contacts proteins S3 and S10.

Binds 16S rRNA, required for the assembly of 30S particles and may also be responsible for determining the conformation of the 16S rRNA at the A site. This Pediococcus pentosaceus (strain ATCC 25745 / CCUG 21536 / LMG 10740 / 183-1w) protein is Small ribosomal subunit protein uS14A.